A 188-amino-acid chain; its full sequence is Elongation factor P (188 aa).

This sequence belongs to the elongation factor P family.

The protein resides in the cytoplasm. It participates in protein biosynthesis; polypeptide chain elongation. Its function is as follows. Involved in peptide bond synthesis. Stimulates efficient translation and peptide-bond synthesis on native or reconstituted 70S ribosomes in vitro. Probably functions indirectly by altering the affinity of the ribosome for aminoacyl-tRNA, thus increasing their reactivity as acceptors for peptidyl transferase. This is Elongation factor P from Chlorobium phaeobacteroides (strain DSM 266 / SMG 266 / 2430).